The primary structure comprises 438 residues: Transmembrane protease serine 11F (438 aa).

The Cytoplasmic segment spans residues 1–32 (MMYAPVEFSEAEFSRAEYQRKQQFWDSVRLAL). The chain crosses the membrane as a helical; Signal-anchor for type II membrane protein span at residues 33 to 53 (FTLAIVAIIGIAIGIVTHFVV). The Extracellular segment spans residues 54-438 (EDDKSFYYLA…RDWIASKTGM (385 aa)). One can recognise an SEA domain in the interval 57–175 (KSFYYLASFK…PSFRLTPIDS (119 aa)). One can recognise a Peptidase S1 domain in the interval 206-437 (IVQGRETAME…YRDWIASKTG (232 aa)). A disulfide bridge links Cys233 with Cys249. Active-site charge relay system residues include His248 and Asp293. 2 disulfides stabilise this stretch: Cys358-Cys374 and Cys385-Cys413. The active-site Charge relay system is the Ser389.

The protein belongs to the peptidase S1 family.

It is found in the membrane. In terms of biological role, probable serine protease. This chain is Transmembrane protease serine 11F (TMPRSS11F), found in Homo sapiens (Human).